Here is a 222-residue protein sequence, read N- to C-terminus: Sugar fermentation stimulation protein homolog (222 aa).

The protein belongs to the SfsA family.

The polypeptide is Sugar fermentation stimulation protein homolog (Thermotoga petrophila (strain ATCC BAA-488 / DSM 13995 / JCM 10881 / RKU-1)).